Consider the following 352-residue polypeptide: Protein Wnt-3a (352 aa).

An N-terminal signal peptide occupies residues 1-18 (MAPLGYFLLLCSLKQALG). Cystine bridges form between C77–C88, C128–C136, C138–C155, C203–C217, C205–C212, C281–C312, C297–C307, C311–C351, C327–C342, C329–C339, and C334–C335. N87 carries N-linked (GlcNAc...) asparagine glycosylation. The O-palmitoleoyl serine; by PORCN moiety is linked to residue S209. N-linked (GlcNAc...) asparagine glycosylation occurs at N298.

It belongs to the Wnt family. Forms a soluble 1:1 complex with AFM; this prevents oligomerization and is required for prolonged biological activity. The complex with AFM may represent the physiological form in body fluids. Homooligomer; disulfide-linked, leading to inactivation. Interacts with PORCN. Interacts with APCDD1 and WLS. Component of the Wnt-Fzd-LRP5-LRP6 signaling complex that contains a WNT protein, a FZD protein and LRP5 or LRP6. Interacts directly in the complex with LRP6. Interacts with glypican GPC3. Interacts with PKD1 (via extracellular domain). Interacts with FZD5. Post-translationally, palmitoleoylation by PORCN is required for efficient binding to frizzled receptors. Palmitoleoylation is required for proper trafficking to cell surface, vacuolar acidification is critical to release palmitoleoylated WNT3A from WLS in secretory vesicles. Depalmitoleoylated by NOTUM, leading to inhibit Wnt signaling pathway, possibly by promoting disulfide bond formation and oligomerization. In terms of processing, proteolytic processing by TIKI1 and TIKI2 promotes oxidation and formation of large disulfide-bond oligomers, leading to inactivation of WNT3A. Disulfide bonds have critical and distinct roles in secretion and activity. Loss of each conserved cysteine in WNT3A results in high molecular weight oxidized Wnt oligomers, which are formed through inter-Wnt disulfide bonding. As to expression, moderately expressed in placenta and at low levels in adult lung, spleen, and prostate.

It localises to the secreted. The protein localises to the extracellular space. The protein resides in the extracellular matrix. Ligand for members of the frizzled family of seven transmembrane receptors. Functions in the canonical Wnt signaling pathway that results in activation of transcription factors of the TCF/LEF family. Required for normal embryonic mesoderm development and formation of caudal somites. Required for normal morphogenesis of the developing neural tube. Mediates self-renewal of the stem cells at the bottom on intestinal crypts (in vitro). The polypeptide is Protein Wnt-3a (WNT3A) (Homo sapiens (Human)).